A 514-amino-acid polypeptide reads, in one-letter code: Sugar transport protein 11 (514 aa).

At 1 to 19 (MAGGAFIDESGHGGDYEGR) the chain is on the cytoplasmic side. Residues 20–40 (VTAFVMITCIVAAMGGLLFGY) traverse the membrane as a helical segment. The Extracellular segment spans residues 41 to 82 (DIGISGGVISMEDFLTKFFPDVLRQMQNKRGRETEYCKYDNE). A helical transmembrane segment spans residues 83–103 (LLTLFTSSLYLAALFASFLAS). Residues 104–112 (TITRLFGRK) are Cytoplasmic-facing. A helical transmembrane segment spans residues 113 to 133 (VSMVIGSLAFLSGALLNGLAI). Over 134-137 (NLEM) the chain is Extracellular. A helical membrane pass occupies residues 138–158 (LIIGRLFLGVGVGFANQSVPL). The Cytoplasmic segment spans residues 159-169 (YLSEMAPAKIR). Residues 170-190 (GALNIGFQLAITIGILAANIV) traverse the membrane as a helical segment. Over 191 to 204 (NYVTPKLQNGIGWR) the chain is Extracellular. Residues 205–225 (LSLGLAGVPAVMMLVGCFFLP) traverse the membrane as a helical segment. The Cytoplasmic segment spans residues 226-290 (DTPNSILERG…RYRPQLTFCT (65 aa)). Residues 291 to 311 (FIPFFQQLTGINVIMFYAPVL) form a helical membrane-spanning segment. At 312–320 (FKTIGFGND) the chain is on the extracellular side. A helical membrane pass occupies residues 321-341 (ASLISAVITGLVNVLSTIVSI). Topologically, residues 342–350 (YSVDKFGRR) are cytoplasmic. A helical transmembrane segment spans residues 351–371 (ALFLQGGFQMIVTQIAVGSMI). Residues 372–389 (GWKFGFNGEGNLSGVDAD) are Extracellular-facing. Residues 390–410 (IILALICLYVAGFAWSWGPLG) traverse the membrane as a helical segment. At 411 to 428 (WLVPSEICPLEIRSAGQS) the chain is on the cytoplasmic side. A helical transmembrane segment spans residues 429-449 (LNVSVNMFFTFFIGQFFLTML). Residues 450–453 (CHMK) are Extracellular-facing. The helical transmembrane segment at 454–474 (FGLFYFFAGMVLIMTIFIYFL) threads the bilayer. Topologically, residues 475–514 (LPETKGVPIEEMGKVWKEHRYWGKYSNNDDGDDVDDDAYF) are cytoplasmic.

It belongs to the major facilitator superfamily. Sugar transporter (TC 2.A.1.1) family. Specifically expressed in germinating pollen and pollen tube (at protein level).

It is found in the cell membrane. Its activity is regulated as follows. Inhibited by uncouplers such as 2,4-dinitrophenol and carbonyl cyanide-m-chlorophenyl-hydrazone. Functionally, mediates an active uptake of hexoses, probably by sugar/hydrogen symport. Can transport glucose, galactose, mannose, xylose and 3-O-methylglucose, but not fructose and ribose. In Arabidopsis thaliana (Mouse-ear cress), this protein is Sugar transport protein 11 (STP11).